Reading from the N-terminus, the 266-residue chain is Signal peptidase I (266 aa).

Topologically, residues M1–S20 are cytoplasmic. A helical transmembrane segment spans residues C21–V41. The Periplasmic portion of the chain corresponds to P42–E266. Catalysis depends on residues S45 and K108.

The protein belongs to the peptidase S26 family.

The protein localises to the cell inner membrane. It catalyses the reaction Cleavage of hydrophobic, N-terminal signal or leader sequences from secreted and periplasmic proteins.. The polypeptide is Signal peptidase I (lepB) (Rickettsia akari (strain Hartford)).